A 655-amino-acid chain; its full sequence is A-type voltage-gated potassium channel KCND3 (655 aa).

The Cytoplasmic segment spans residues 1–182 (MAAGVAAWLP…FENPHTSTLA (182 aa)). Interaction with KCNIP1 stretches follow at residues 6–21 (AAWL…GWMP) and 70–78 (EKEFFFNED). Residues His-104, Cys-110, Cys-131, and Cys-132 each coordinate Zn(2+). The residue at position 153 (Ser-153) is a Phosphoserine. A helical membrane pass occupies residues 183 to 204 (LVFYYVTGFFIAVSVITNVVET). Topologically, residues 205–223 (VPCGTVPGSKELPCGERYS) are extracellular. A helical membrane pass occupies residues 224-246 (VAFFCLDTACVMIFTVEYLLRLF). Over 247–253 (AAPSRYR) the chain is Cytoplasmic. Residues 254–277 (FIRSVMSIIDVVAIMPYYIGLVMT) form a helical membrane-spanning segment. The Extracellular portion of the chain corresponds to 278 to 283 (NNEDVS). The helical; Voltage-sensor transmembrane segment at 284-306 (GAFVTLRVFRVFRIFKFSRHSQG) threads the bilayer. Topologically, residues 307–318 (LRILGYTLKSCA) are cytoplasmic. Residues 319-343 (SELGFLLFSLTMAIIIFATVMFYAE) form a helical membrane-spanning segment. Topologically, residues 344 to 352 (KGSSASKFT) are extracellular. Positions 353 to 366 (SIPASFWYTIVTMT) form an intramembrane region, helical. The K(+) site is built by Thr-367, Leu-368, Gly-369, and Tyr-370. A Selectivity filter motif is present at residues 367 to 372 (TLGYGD). An intramembrane segment occupies 367-374 (TLGYGDMV). Residues 378–400 (IAGKIFGSICSLSGVLVIALPVP) traverse the membrane as a helical segment. Topologically, residues 401-655 (VIVSNFSRIY…TSNVVKVSVL (255 aa)) are cytoplasmic. Thr-459 is subject to Phosphothreonine. Residues 470–487 (SLIESQHHHLLHCLEKTT) form an interaction with KCNIP1 and KCNIP2 region. Residues 474–489 (SQHHHLLHCLEKTTGL) are mediates dendritic targeting. A disordered region spans residues 523–565 (SSMQNYPSTRSPSLSSHSGLTTTCCSRRSKKTTHLPNSNLPAT). Positions 529-548 (PSTRSPSLSSHSGLTTTCCS) are enriched in low complexity. Ser-569 is modified (phosphoserine; by CaMK2D). Ser-585 carries the post-translational modification Phosphoserine. Residues 616-647 (SIPTPPALTPEGESRPPPASPGPNTNIPSITS) form a disordered region. A compositionally biased stretch (polar residues) spans 637–647 (GPNTNIPSITS).

The protein belongs to the potassium channel family. D (Shal) (TC 1.A.1.2) subfamily. Kv4.3/KCND3 sub-subfamily. Homotetramer. Heterotetramer with KCND2. Associates with the regulatory subunits KCNIP3 and KCNIP4. Interacts with KCNE1, KCNE2, SCN1B and KCNAB1 and DLG1. Component of heteromultimeric potassium channels. Identified in potassium channel complexes containing KCND1, KCND2, KCND3, KCNIP1, KCNIP2, KCNIP3, KCNIP4, DPP6 and DPP10. Interacts with KCNIP1; each KCNIP1 monomer interacts with two adjacent KCND3 subunits, through both the N-terminal inactivation ball of a KCND3 subunit and a C-terminal helix from the adjacent KCND3 subunit, clamping them together; this interaction stabilizes the tetrameric form and modulates the channel gating kinetics namely channel activation and inactivation kinetics and rate of recovery from inactivation. Interacts with DPP6; this interaction modulates the channel gating kinetics namely channel activation and inactivation kinetics and rate of recovery from inactivation. Interacts with KCNIP2; each KCNIP2 monomer interacts with two adjacent KCND3 subunits, through both the N-terminal inactivation ball of a KCND3 subunit and a C-terminal helix from the adjacent KCND3 subunit, clamping them together; this interaction modulates the channel gating kinetics. In terms of processing, regulated through phosphorylation at Ser-569 by CaMK2D. As to expression, highly expressed in brain, in particular in the retrosplenial cortex, medial habenula, anterior thalamus, hippocampus, cerebellum and lateral geniculate and superior colliculus. Highly expressed in heart atrium (at protein level) and throughout the ventricle wall, in lung and vas deferens.

Its subcellular location is the cell membrane. It localises to the sarcolemma. The protein resides in the cell projection. The protein localises to the dendrite. The catalysed reaction is K(+)(in) = K(+)(out). Its function is as follows. Pore-forming (alpha) subunit of voltage-gated A-type potassium channels that mediates transmembrane potassium transport in excitable membranes, in brain and heart. In cardiomyocytes, may generate the transient outward potassium current I(To). In neurons, may conduct the transient subthreshold somatodendritic A-type potassium current (ISA). Kinetics properties are characterized by fast activation at subthreshold membrane potentials, rapid inactivation, and quick recovery from inactivation. Channel properties are modulated by interactions with regulatory subunits. Interaction with the regulatory subunits KCNIP1 or KCNIP2 modulates the channel gating kinetics namely channel activation and inactivation kinetics and rate of recovery from inactivation. Likewise, interaction with DPP6 modulates the channel gating kinetics namely channel activation and inactivation kinetics. The chain is A-type voltage-gated potassium channel KCND3 from Rattus norvegicus (Rat).